A 640-amino-acid chain; its full sequence is Threonine--tRNA ligase (640 aa).

One can recognise a TGS domain in the interval 1–61 (MPVITLPDGS…SNDATLQIIT (61 aa)). The interval 242 to 533 (DHRKIGKQLD…LIEHYAGVFP (292 aa)) is catalytic. Zn(2+) is bound by residues Cys333, His384, and His510.

It belongs to the class-II aminoacyl-tRNA synthetase family. Homodimer. Requires Zn(2+) as cofactor.

It localises to the cytoplasm. It catalyses the reaction tRNA(Thr) + L-threonine + ATP = L-threonyl-tRNA(Thr) + AMP + diphosphate + H(+). In terms of biological role, catalyzes the attachment of threonine to tRNA(Thr) in a two-step reaction: L-threonine is first activated by ATP to form Thr-AMP and then transferred to the acceptor end of tRNA(Thr). Also edits incorrectly charged L-seryl-tRNA(Thr). In Pseudomonas putida (strain ATCC 700007 / DSM 6899 / JCM 31910 / BCRC 17059 / LMG 24140 / F1), this protein is Threonine--tRNA ligase.